We begin with the raw amino-acid sequence, 210 residues long: Calcineurin B-like protein 4 (210 aa).

Gly2 carries N-myristoyl glycine lipidation. 4 consecutive EF-hand domains span residues Glu31–Arg66, Lys67–Lys102, Pro104–Glu139, and Ala148–Ser183. Residues Asp161, Asn163, Asp165, Arg167, and Glu172 each coordinate Ca(2+).

It belongs to the calcineurin regulatory subunit family. In terms of assembly, homodimer. Interacts with CIPK24. In terms of tissue distribution, expressed in leaves.

The protein localises to the cell membrane. Acts as a calcium sensor involved in the regulatory pathway for the control of intracellular Na(+) and K(+) homeostasis and salt tolerance. Operates in synergy with CIPK24 to activate the plasma membrane Na(+)/H(+) antiporter SOS1. May function as positive regulator of salt stress responses. CBL proteins interact with CIPK serine-threonine protein kinases. Binding of a CBL protein to the regulatory NAF domain of a CIPK protein lead to the activation of the kinase in a calcium-dependent manner. The protein is Calcineurin B-like protein 4 (CBL4) of Oryza sativa subsp. japonica (Rice).